The chain runs to 120 residues: UPF0231 protein YacL (120 aa).

It belongs to the UPF0231 family.

The polypeptide is UPF0231 protein YacL (Escherichia fergusonii (strain ATCC 35469 / DSM 13698 / CCUG 18766 / IAM 14443 / JCM 21226 / LMG 7866 / NBRC 102419 / NCTC 12128 / CDC 0568-73)).